Here is a 185-residue protein sequence, read N- to C-terminus: Ribosome-recycling factor (185 aa).

This sequence belongs to the RRF family.

The protein resides in the cytoplasm. Its function is as follows. Responsible for the release of ribosomes from messenger RNA at the termination of protein biosynthesis. May increase the efficiency of translation by recycling ribosomes from one round of translation to another. The polypeptide is Ribosome-recycling factor (Methylobacillus flagellatus (strain ATCC 51484 / DSM 6875 / VKM B-1610 / KT)).